The following is a 311-amino-acid chain: Zeta-sarcoglycan (311 aa).

The Cytoplasmic portion of the chain corresponds to 1–50 (MDRSTDLDIQELKMTREQYILATQQNNLPRPENAQLYPVGIYGWRKRCLY). The chain crosses the membrane as a helical; Signal-anchor for type II membrane protein span at residues 51–71 (FFVLLLLVTMIVNLAMTIWIL). Residues 72 to 311 (KVMNFTVDGM…QSSSSICLWN (240 aa)) lie on the Extracellular side of the membrane. Residues asparagine 75 and asparagine 123 are each glycosylated (N-linked (GlcNAc...) asparagine). Cysteine 285 and cysteine 301 form a disulfide bridge.

This sequence belongs to the sarcoglycan beta/delta/gamma/zeta family. Expressed in the heart, skeletal muscle and arterial vascular smooth muscle.

It localises to the cell membrane. It is found in the sarcolemma. Its subcellular location is the cytoplasm. The protein localises to the cytoskeleton. Component of the sarcoglycan complex, a subcomplex of the dystrophin-glycoprotein complex which forms a link between the F-actin cytoskeleton and the extracellular matrix. May play a role in the maintenance of striated muscle membrane stability. This chain is Zeta-sarcoglycan (Sgcz), found in Mus musculus (Mouse).